The chain runs to 427 residues: Lipophilic envelope-spanning tunnel protein A (427 aa).

The Cytoplasmic segment spans residues 1 to 75 (MALNTPQITP…LTRLAAMAFT (75 aa)). Residues 76-96 (MLLLMPFAWGEPLLHIWLLGI) form a helical membrane-spanning segment. Over 97–120 (RIDANVMQGIWQMTKQGDAITGSM) the chain is Periplasmic. Residues 121 to 141 (VFFCVIGAPLILVTSIAYLWF) form a helical membrane-spanning segment. Residues 142 to 269 (GNRLGMNLRP…RHSLQKCWAA (128 aa)) are Cytoplasmic-facing. Residues 270–290 (LLASIVLLLPANLLPISIIYL) traverse the membrane as a helical segment. Residues 291–310 (NGGRQEDTILSGIMSLASSN) are Periplasmic-facing. The chain crosses the membrane as a helical span at residues 311–331 (IAVAGIVFIASILVPFTKVIV). The Cytoplasmic segment spans residues 332–350 (MFTLLLSIHFKCQQGLRTR). A helical membrane pass occupies residues 351–371 (ILLLRMVTWIGRWSMLDLFVI). At 372 to 382 (SLTMSLINRDQ) the chain is on the periplasmic side. A helical membrane pass occupies residues 383–403 (ILAFTMGPAAFYFGAAVILTI). The Cytoplasmic portion of the chain corresponds to 404 to 427 (LAVEWLDSRLLWDAHESGNARFDD).

The protein belongs to the PqiA family. May interact with LetB in the inner membrane.

Its subcellular location is the cell inner membrane. Could be part, together with LetB, of a system that transports lipids between the inner membrane and the outer membrane. Contributes to membrane integrity. The protein is Lipophilic envelope-spanning tunnel protein A of Escherichia coli (strain K12).